The chain runs to 274 residues: MGFDDTCNTGLVLGLGPSPIPNNYNSTIRQSSVYKLEPSLTLCLSGDPSVTVVTGADQLCRQTSSHSGVSSFSSGRVVKRERDGGEESPEEEEMTERVISDYHEDEEGISARKKLRLTKQQSALLEESFKDHSTLNPKQKQVLARQLNLRPRQVEVWFQNRRARTKLKQTEVDCEFLKKCCETLADENIRLQKEIQELKTLKLTQPFYMHMPASTLTKCPSCERIGGGGGGNGGGGGGSGATAVIVDGSTAKGAFSISSKPHFFNPFTNPSAAC.

Residues 64–74 (SSHSGVSSFSS) show a composition bias toward low complexity. Positions 64–96 (SSHSGVSSFSSGRVVKRERDGGEESPEEEEMTE) are disordered. Positions 110 to 169 (SARKKLRLTKQQSALLEESFKDHSTLNPKQKQVLARQLNLRPRQVEVWFQNRRARTKLKQ) form a DNA-binding region, homeobox. Positions 177-198 (LKKCCETLADENIRLQKEIQEL) are leucine-zipper.

It belongs to the HD-ZIP homeobox family. Class II subfamily.

Its subcellular location is the nucleus. Functionally, probable transcription factor. The protein is Homeobox-leucine zipper protein HAT9 (HAT9) of Arabidopsis thaliana (Mouse-ear cress).